The chain runs to 554 residues: Glucose-6-phosphate isomerase (554 aa).

Catalysis depends on glutamate 358, which acts as the Proton donor. Active-site residues include histidine 389 and lysine 515. The segment covering 527 to 540 has biased composition (polar residues); that stretch reads SDGSPQRQSDSSTD. Positions 527–554 are disordered; sequence SDGSPQRQSDSSTDALVRRYRTQRGRTG. A compositionally biased stretch (basic residues) spans 544–554; sequence RRYRTQRGRTG.

This sequence belongs to the GPI family.

Its subcellular location is the cytoplasm. It catalyses the reaction alpha-D-glucose 6-phosphate = beta-D-fructose 6-phosphate. The protein operates within carbohydrate biosynthesis; gluconeogenesis. It participates in carbohydrate degradation; glycolysis; D-glyceraldehyde 3-phosphate and glycerone phosphate from D-glucose: step 2/4. Catalyzes the reversible isomerization of glucose-6-phosphate to fructose-6-phosphate. The polypeptide is Glucose-6-phosphate isomerase (Mycobacterium ulcerans (strain Agy99)).